Here is a 249-residue protein sequence, read N- to C-terminus: Flagellar brake protein YcgR (249 aa).

One can recognise a PilZ domain in the interval 117–236 (QRREFFRVDA…ERELQQVIFS (120 aa)).

Belongs to the YcgR family. In terms of assembly, monomer. Interacts with the flagellar basal bodies.

The protein localises to the bacterial flagellum basal body. Its function is as follows. Acts as a flagellar brake, regulating swimming and swarming in a bis-(3'-5') cyclic diguanylic acid (c-di-GMP)-dependent manner. Binds 1 c-di-GMP dimer per subunit. Increasing levels of c-di-GMP lead to decreased motility. This chain is Flagellar brake protein YcgR, found in Erwinia tasmaniensis (strain DSM 17950 / CFBP 7177 / CIP 109463 / NCPPB 4357 / Et1/99).